Here is a 193-residue protein sequence, read N- to C-terminus: V-type sodium ATPase subunit E (193 aa).

This sequence belongs to the V-ATPase E subunit family. In terms of processing, the N-terminus is blocked.

Involved in ATP-driven sodium extrusion. This Enterococcus hirae (strain ATCC 9790 / DSM 20160 / JCM 8729 / LMG 6399 / NBRC 3181 / NCIMB 6459 / NCDO 1258 / NCTC 12367 / WDCM 00089 / R) protein is V-type sodium ATPase subunit E (ntpE).